The following is a 201-amino-acid chain: MANKGPSYGMSREVQSKIEKKYDEELEERLVEWIVVQCGPDVGRPDRGRLGFQVWLKNGVILSKLVNSLYPEGSKPVKVPENPPSMVFKQMEQVAQFLKAAEDYGVIKTDMFQTVDLYEGKDMAAVQRTLMALGSLAVTKNDGNYRGDPNWFMKKAQEHKRDFTDSQLQEGKHVIGLQMGSNRGASQAGMTGYGRPRQIIS.

A2 is modified (N-acetylalanine). The 114-residue stretch at 24-137 (EELEERLVEW…RTLMALGSLA (114 aa)) folds into the Calponin-homology (CH) domain. Position 166 is a phosphoserine (S166). The residue at position 172 (K172) is an N6-acetyllysine. A Calponin-like repeat occupies 175 to 200 (IGLQMGSNRGASQAGMTGYGRPRQII). At S181 the chain carries Phosphoserine. R183 is modified (omega-N-methylarginine).

It belongs to the calponin family.

The protein localises to the cytoplasm. In terms of biological role, actin cross-linking/gelling protein. This chain is Transgelin (Tagln), found in Mus musculus (Mouse).